The sequence spans 372 residues: Lectin/endochitinase 1 (372 aa).

The N-terminal stretch at 1 to 23 (MMMRFLSAVVIMSSAMAVGLVSA) is a signal peptide. Gln24 lines the substrate pocket. The residue at position 24 (Gln24) is a Pyrrolidone carboxylic acid. Chitin-binding type-1 domains follow at residues 24–64 (QRCG…KCWS) and 69–111 (DHRC…RCSS). 4 cysteine pairs are disulfide-bonded: Cys26-Cys41, Cys35-Cys47, Cys40-Cys54, and Cys58-Cys62. A substrate-binding site is contributed by 42-53 (SIWGWCGDSEPY). His70 is a binding site for Zn(2+). Disulfide bonds link Cys72–Cys87, Cys81–Cys93, Cys86–Cys100, and Cys105–Cys109. His90 is a Zn(2+) binding site. The spacer stretch occupies residues 113 to 128 (VRGPRVALSGNSTANS). An N-linked (GlcNAc...) asparagine glycan is attached at Asn123. A chitinase region spans residues 129-372 (IGNVVVTEPL…FQRIQMRVAA (244 aa)).

Monomer and homodimer. Zinc favors dimerization. Active in the monomeric form but probably inactive in the dimeric form. The interaction with glycans on the mammalian TCR and MHC molecules of the T-cell and antigen-presenting cell, respectively, is inhibited by oligomers of GlcNAc. Post-translationally, proteolytically processed to yield a very small protein (8.5 kDa, 86 AA) containing only the two chitin-binding domains. Rhizomes and inflorescence with immature seeds.

The catalysed reaction is Random endo-hydrolysis of N-acetyl-beta-D-glucosaminide (1-&gt;4)-beta-linkages in chitin and chitodextrins.. Its function is as follows. Functions both as a chitinase and as a N-acetyl-D-glucosamine binding lectin. Inhibits the growth of several phytopathogenic chitin-containing fungi. Also possesses insecticidal activity and superantigenic properties. The chain is Lectin/endochitinase 1 (UDA1) from Urtica dioica (Great nettle).